The following is a 468-amino-acid chain: Monocarboxylate transporter 6 (468 aa).

Over 1–13 the chain is Cytoplasmic; sequence MARALEQADGRWA. The chain crosses the membrane as a helical span at residues 14–34; sequence WVVLLSSLVTQALTLGFPTCI. Residues 35-53 lie on the Extracellular side of the membrane; it reads GVFFTDLQRDFQASNSETS. The chain crosses the membrane as a helical span at residues 54-74; that stretch reads WFPSILGAMVHGGGPLCSILV. The Cytoplasmic segment spans residues 75-80; that stretch reads KHFGCR. A helical transmembrane segment spans residues 81–101; it reads VTMMLGGVLASLGMVVSTFSG. A topological domain (extracellular) is located at residue serine 102. Residues 103–122 traverse the membrane as a helical segment; that stretch reads LTHLFLTAGVITGLGMCFSF. The Cytoplasmic portion of the chain corresponds to 123 to 138; the sequence is QSSITVVGLYFVRRRP. Residues 139-159 form a helical membrane-spanning segment; sequence LANALASMGLSMGVTLWPLLA. Topologically, residues 160-171 are extracellular; it reads RYLLETLGWRGA. The helical transmembrane segment at 172–192 threads the bilayer; sequence FLIFGGILLHCCVCGALLRPV. At 193-239 the chain is on the cytoplasmic side; it reads ATNEVPEPKEDPLLPPKIPTRSCLATCVSTIRYHLAFDILRHNMGFC. Residues 240–260 traverse the membrane as a helical segment; that stretch reads IYVTGVTWMNLGFALPHIFLV. The Extracellular segment spans residues 261–274; the sequence is PYAMHHGVDDYWAA. Residues 275-295 form a helical membrane-spanning segment; sequence MLMSIVGFCNIFLRPMAGLLL. The Cytoplasmic segment spans residues 296–306; sequence AGRKSLAAYRK. A helical transmembrane segment spans residues 307–327; that stretch reads YLFAVAILINGLTNLICTVSA. The Extracellular segment spans residues 328 to 330; sequence DFR. A helical transmembrane segment spans residues 331–351; sequence VLLGYCLVYSLSMCGVGILVF. At 352–368 the chain is on the cytoplasmic side; it reads QVLMDIVPMDRFPSALG. Residues 369 to 389 traverse the membrane as a helical segment; sequence LFTILCGVTSLISPPLAGLLL. The Extracellular portion of the chain corresponds to 390 to 396; it reads DKTNNFS. A helical membrane pass occupies residues 397–417; the sequence is YVFYMSSGFLVSGSLILGVGF. Residues 418–468 are Cytoplasmic-facing; that stretch reads YAAEKKKLKQDGQAKMENATSEMTPMHDLTSEDKDSAKKQPYPESIYMTNV. Positions 429–468 are disordered; it reads GQAKMENATSEMTPMHDLTSEDKDSAKKQPYPESIYMTNV. Residues 446 to 455 are compositionally biased toward basic and acidic residues; sequence LTSEDKDSAK.

The protein belongs to the major facilitator superfamily. Monocarboxylate porter (TC 2.A.1.13) family.

The protein localises to the cell membrane. Functionally, proton-linked monocarboxylate transporter. Catalyzes the rapid transport across the plasma membrane of many monocarboxylates such as lactate, pyruvate, branched-chain oxo acids derived from leucine, valine and isoleucine, and the ketone bodies acetoacetate, beta-hydroxybutyrate and acetate. The polypeptide is Monocarboxylate transporter 6 (Slc16a5) (Mus musculus (Mouse)).